The sequence spans 887 residues: UPF0182 protein CTC_00086 (887 aa).

7 helical membrane passes run 9-29, 47-67, 87-107, 146-166, 195-215, 242-262, and 266-286; these read FIAI…SFII, FFTI…SIWL, LMIA…SSKY, VLIL…YFII, GKQL…GYII, IYRI…ISII, and IKPI…EGAT.

The protein belongs to the UPF0182 family.

Its subcellular location is the cell membrane. The chain is UPF0182 protein CTC_00086 from Clostridium tetani (strain Massachusetts / E88).